Consider the following 323-residue polypeptide: rRNA 2'-O-methyltransferase fibrillarin (323 aa).

The tract at residues 1–80 (MSFRPGSRGG…GARGGAKGGA (80 aa)) is disordered. The span at 7–78 (SRGGARGGRG…RGGARGGAKG (72 aa)) shows a compositional bias: gly residues. Residues Arg-8, Arg-12, Arg-15, Arg-19, Arg-25, Arg-29, Arg-35, Arg-39, Arg-43, Arg-49, Arg-53, Arg-57, Arg-61, Arg-65, Arg-69, and Arg-73 each carry the asymmetric dimethylarginine modification. S-adenosyl-L-methionine is bound by residues 175-176 (TS), 194-195 (EF), 219-220 (DA), and 239-242 (DVAQ).

This sequence belongs to the methyltransferase superfamily. Fibrillarin family. In terms of assembly, component of box C/D small nucleolar ribonucleoprotein (snoRNP) particles that contain SNU13, NOP1, SIK1/NOP56 and NOP58, plus a guide RNA. By homology to other fibrillarins, some or all of the N-terminal domain arginines are modified to asymmetric dimethylarginine (DMA).

The protein localises to the nucleus. The protein resides in the nucleolus. It catalyses the reaction L-glutaminyl-[histone H2A] + S-adenosyl-L-methionine = N(5)-methyl-L-glutaminyl-[histone H2A] + S-adenosyl-L-homocysteine + H(+). S-adenosyl-L-methionine-dependent methyltransferase that has the ability to methylate both RNAs and proteins. Involved in pre-rRNA processing. Utilizes the methyl donor S-adenosyl-L-methionine to catalyze the site-specific 2'-hydroxyl methylation of ribose moieties in pre-ribosomal RNA. Site specificity is provided by a guide RNA that base pairs with the substrate. Methylation occurs at a characteristic distance from the sequence involved in base pairing with the guide RNA. Also acts as a protein methyltransferase by mediating methylation of 'Gln-105' of histone H2A (H2AQ105me), a modification that impairs binding of the FACT complex and is specifically present at 35S ribosomal DNA locus. In Candida glabrata (strain ATCC 2001 / BCRC 20586 / JCM 3761 / NBRC 0622 / NRRL Y-65 / CBS 138) (Yeast), this protein is rRNA 2'-O-methyltransferase fibrillarin (NOP1).